The following is a 371-amino-acid chain: Queuine tRNA-ribosyltransferase (371 aa).

D90 acts as the Proton acceptor in catalysis. Residues D90 to F94, D144, Q189, and G215 each bind substrate. The tract at residues G246 to N252 is RNA binding. D265 functions as the Nucleophile in the catalytic mechanism. Residues T270 to R274 form an RNA binding; important for wobble base 34 recognition region. Residues C303, C305, C308, and H334 each coordinate Zn(2+).

This sequence belongs to the queuine tRNA-ribosyltransferase family. In terms of assembly, homodimer. Within each dimer, one monomer is responsible for RNA recognition and catalysis, while the other monomer binds to the replacement base PreQ1. The cofactor is Zn(2+).

It catalyses the reaction 7-aminomethyl-7-carbaguanine + guanosine(34) in tRNA = 7-aminomethyl-7-carbaguanosine(34) in tRNA + guanine. It functions in the pathway tRNA modification; tRNA-queuosine biosynthesis. In terms of biological role, catalyzes the base-exchange of a guanine (G) residue with the queuine precursor 7-aminomethyl-7-deazaguanine (PreQ1) at position 34 (anticodon wobble position) in tRNAs with GU(N) anticodons (tRNA-Asp, -Asn, -His and -Tyr). Catalysis occurs through a double-displacement mechanism. The nucleophile active site attacks the C1' of nucleotide 34 to detach the guanine base from the RNA, forming a covalent enzyme-RNA intermediate. The proton acceptor active site deprotonates the incoming PreQ1, allowing a nucleophilic attack on the C1' of the ribose to form the product. After dissociation, two additional enzymatic reactions on the tRNA convert PreQ1 to queuine (Q), resulting in the hypermodified nucleoside queuosine (7-(((4,5-cis-dihydroxy-2-cyclopenten-1-yl)amino)methyl)-7-deazaguanosine). This is Queuine tRNA-ribosyltransferase from Helicobacter acinonychis (strain Sheeba).